The following is a 48-amino-acid chain: Fimbrial assembly protein, serogroup A1 (48 aa).

This chain is Fimbrial assembly protein, serogroup A1 (fimB), found in Dichelobacter nodosus (Bacteroides nodosus).